Here is a 192-residue protein sequence, read N- to C-terminus: Imidazoleglycerol-phosphate dehydratase (192 aa).

This sequence belongs to the imidazoleglycerol-phosphate dehydratase family.

The protein localises to the cytoplasm. It carries out the reaction D-erythro-1-(imidazol-4-yl)glycerol 3-phosphate = 3-(imidazol-4-yl)-2-oxopropyl phosphate + H2O. It participates in amino-acid biosynthesis; L-histidine biosynthesis; L-histidine from 5-phospho-alpha-D-ribose 1-diphosphate: step 6/9. The chain is Imidazoleglycerol-phosphate dehydratase from Methanocella arvoryzae (strain DSM 22066 / NBRC 105507 / MRE50).